We begin with the raw amino-acid sequence, 45 residues long: Large ribosomal subunit protein bL34 (45 aa).

Belongs to the bacterial ribosomal protein bL34 family.

The sequence is that of Large ribosomal subunit protein bL34 from Prochlorococcus marinus (strain MIT 9313).